We begin with the raw amino-acid sequence, 643 residues long: MVDAGGVENITQLPQELPQMMAAAADGLGSIAIDTTQLNMSVTDPTAWATAMNNLGMVPVGLPGQQLVSDSICVPGFDPSLNMMTGITPINPMIPGLGLVPPPPPTEVAVVKEIIHCKSCTLFPQNPNLPPPSTRERPPGCKTVFVGGLPENATEEIIQEVFEQCGDITAIRKSKKNFCHIRFAEEFMVDKAIYLSGYRMRLGSSTDKKDSGRLHVDFAQARDDFYEWECKQRMRAREERHRRKLEEDRLRPPSPPAIMHYSEHEAALLAEKLKDDSKFSEAITVLLSWIERGEVNRRSANQFYSMVQSANSHVRRLMNEKATHEQEMEEAKENFKNALTGILTQFEQIVAVFNASTRQKAWDHFSKAQRKNIDIWRKHSEELRNAQSEQLMGIRREEEMEMSDDENCDSPTKKMRVDESALAAQAYALKEENDSLRWQLDAYRNEVELLKQEKEQLFRTEENLTKDQQLQFLQQTMQGMQQQLLTIQEELNNKKSELEQAKEEQSHTQALLKVLQEQLKGTKELVETNGHSHEDSNEINVLTVALVNQDRENNIEKRSQGLKSEKEALLIGIISTFLHVHPFGANIEYLWSYMQQLDSKISANEIEMLLMRLPRMFKQEFTGVGATLEKRWKLCAFEGIKTT.

The RRM domain occupies 142–221; that stretch reads KTVFVGGLPE…GRLHVDFAQA (80 aa). Coiled coils occupy residues 307 to 342 and 425 to 570; these read VQSANSHVRRLMNEKATHEQEMEEAKENFKNALTGI and QAYA…EALL.

The protein belongs to the ENOX family. Cu cation is required as a cofactor. In terms of tissue distribution, expressed in lymphocyte cells, breast and breast cancer (at protein level). Found in the sera of cancer patients with a wide variety of cancers including breast, prostate, lung and ovarian cancers, leukemias, and lymphomas. Found also in the serum of healthy volunteers or patients with disorders other than cancer. Probably shed into serum by cancer cells.

It localises to the cell membrane. The protein resides in the secreted. It is found in the extracellular space. With respect to regulation, not inhibited by the antitumor sulfonylurea LY181984, the vabilloid capsaicin, and retinoids. Functionally, probably acts as a terminal oxidase of plasma electron transport from cytosolic NAD(P)H via hydroquinones to acceptors at the cell surface. Hydroquinone oxidase activity alternates with a protein disulfide-thiol interchange/oxidoreductase activity which may control physical membrane displacements associated with vesicle budding or cell enlargement. The activities oscillate with a period length of 24 minutes and play a role in control of the ultradian cellular biological clock. The sequence is that of Ecto-NOX disulfide-thiol exchanger 1 (ENOX1) from Homo sapiens (Human).